A 171-amino-acid polypeptide reads, in one-letter code: 3-hydroxydecanoyl-[acyl-carrier-protein] dehydratase (171 aa).

The active site involves histidine 70.

Belongs to the thioester dehydratase family. FabA subfamily. In terms of assembly, homodimer.

The protein localises to the cytoplasm. The enzyme catalyses a (3R)-hydroxyacyl-[ACP] = a (2E)-enoyl-[ACP] + H2O. It catalyses the reaction (3R)-hydroxydecanoyl-[ACP] = (2E)-decenoyl-[ACP] + H2O. The catalysed reaction is (2E)-decenoyl-[ACP] = (3Z)-decenoyl-[ACP]. It participates in lipid metabolism; fatty acid biosynthesis. In terms of biological role, necessary for the introduction of cis unsaturation into fatty acids. Catalyzes the dehydration of (3R)-3-hydroxydecanoyl-ACP to E-(2)-decenoyl-ACP and then its isomerization to Z-(3)-decenoyl-ACP. Can catalyze the dehydratase reaction for beta-hydroxyacyl-ACPs with saturated chain lengths up to 16:0, being most active on intermediate chain length. The sequence is that of 3-hydroxydecanoyl-[acyl-carrier-protein] dehydratase from Shewanella loihica (strain ATCC BAA-1088 / PV-4).